The sequence spans 299 residues: Transcription termination/antitermination protein NusG (299 aa).

Residues 30–96 form a disordered region; it reads DPDEAELADA…APVEPAEPVD (67 aa). 2 tandem repeats follow at residues 46-49 and 70-73. The segment at 46–87 is 4 X 4 AA repeats of E-E-A-A; it reads EEAALHVESDEDEDEADVEVDAAVEEAADDAEVAEEEAEEAA. The segment covering 54-87 has biased composition (acidic residues); that stretch reads SDEDEDEADVEVDAAVEEAADDAEVAEEEAEEAA. The stretch at 80–83 is one 3; approximate repeat; sequence EEEA. Copy 4 of the repeat occupies 84-87; sequence EEAA. The KOW domain maps to 248–276; that stretch reads VGDSVTVTDGPFATLQATINEINPDSKKV.

It belongs to the NusG family. In terms of processing, the N-terminus is blocked.

In terms of biological role, participates in transcription elongation, termination and antitermination. This chain is Transcription termination/antitermination protein NusG, found in Streptomyces virginiae (Streptomyces cinnamonensis).